The sequence spans 1227 residues: Pentatricopeptide repeat-containing protein At5g15280, mitochondrial (1227 aa).

A mitochondrion-targeting transit peptide spans 1–31 (MLNLLSISSSSRLRFLNKVSSLTYHYSFAFF). PPR repeat units follow at residues 146–180 (LPQA…GDTM), 182–216 (NEGI…GLVP), 217–251 (LTSC…RAEL), 255–289 (NIDS…GCIL), 290–320 (NSSI…VKYE), 322–356 (DVFV…GFKQ), 357–391 (DEVT…GYKP), 392–426 (DVYS…GMML), 427–461 (SLST…GLIE), 527–561 (VLPE…GQKL), 562–597 (SRRS…AYQL), 598–632 (DGET…HHPI), 633–667 (DNVT…NWLP), 668–698 (DLND…VFIS), 703–737 (QSEA…GCIV), 738–772 (EQEV…KHIP), 773–800 (SLGS…AEQI), 802–836 (SSYV…GLSS), 837–871 (YNKI…NIIC), 872–906 (SVKS…ESNP), 908–942 (GVII…GVLP), 943–977 (DETT…GMKP), 978–1012 (NNRS…GWNL), 1014–1044 (SSVV…VTRN), 1047–1081 (MAPN…QSIP), 1082–1116 (GSSS…GLSP), 1117–1151 (SIST…GESP), and 1152–1186 (SQEM…GYEV).

Belongs to the PPR family. P subfamily.

The protein resides in the mitochondrion. This chain is Pentatricopeptide repeat-containing protein At5g15280, mitochondrial, found in Arabidopsis thaliana (Mouse-ear cress).